The chain runs to 515 residues: Bifunctional purine biosynthesis protein PurH (515 aa).

Positions 1-145 constitute an MGS-like domain; the sequence is MTKRALISVS…KNHASVTVVV (145 aa).

The protein belongs to the PurH family.

The enzyme catalyses (6R)-10-formyltetrahydrofolate + 5-amino-1-(5-phospho-beta-D-ribosyl)imidazole-4-carboxamide = 5-formamido-1-(5-phospho-D-ribosyl)imidazole-4-carboxamide + (6S)-5,6,7,8-tetrahydrofolate. The catalysed reaction is IMP + H2O = 5-formamido-1-(5-phospho-D-ribosyl)imidazole-4-carboxamide. It participates in purine metabolism; IMP biosynthesis via de novo pathway; 5-formamido-1-(5-phospho-D-ribosyl)imidazole-4-carboxamide from 5-amino-1-(5-phospho-D-ribosyl)imidazole-4-carboxamide (10-formyl THF route): step 1/1. It functions in the pathway purine metabolism; IMP biosynthesis via de novo pathway; IMP from 5-formamido-1-(5-phospho-D-ribosyl)imidazole-4-carboxamide: step 1/1. The protein is Bifunctional purine biosynthesis protein PurH of Streptococcus pyogenes serotype M3 (strain ATCC BAA-595 / MGAS315).